The primary structure comprises 465 residues: 2-methylcitrate synthase, mitochondrial (465 aa).

The N-terminal 29 residues, 1-29 (MAMTMRSTRHASKLAQTARLALTNSRRYS), are a transit peptide targeting the mitochondrion. Arg74 and Lys192 together coordinate CoA. His269 contributes to the oxaloacetate binding site. Leu304 is a CoA binding site. The active site involves His305. CoA is bound by residues Val346, Gly348, and Tyr349. His351 and Arg360 together coordinate oxaloacetate. The active site involves His351. Residues Thr400, Lys401, and Asn406 each contribute to the CoA site. Asp408 is a catalytic residue. Positions 434 and 454 each coordinate oxaloacetate.

The protein belongs to the citrate synthase family. In terms of assembly, homodimer.

It localises to the mitochondrion matrix. It catalyses the reaction propanoyl-CoA + oxaloacetate + H2O = (2S,3S)-2-methylcitrate + CoA + H(+). The enzyme catalyses oxaloacetate + acetyl-CoA + H2O = citrate + CoA + H(+). The protein operates within organic acid metabolism; propanoate degradation. In terms of biological role, component of the methylcitrate cycle that catalyzes the synthesis of (2S,3S)-2-methylcitrate from propionyl-CoA and oxaloacetate. Plays an important role in detoxification of propionyl-CoA, an inhibitor of both primary and secondary metabolism. Also has citrate synthase activity using as substrates acetyl-CoA and oxaloacetate. Plays a key role in the estabishment of invasive pulmonary aspergillosis. This is 2-methylcitrate synthase, mitochondrial from Aspergillus fumigatus (strain CBS 144.89 / FGSC A1163 / CEA10) (Neosartorya fumigata).